Here is a 69-residue protein sequence, read N- to C-terminus: Conotoxin Gla-TxXI (69 aa).

The N-terminal stretch at 1–25 (MVRVTSVGCFLLVIVSLNLVVLTNA) is a signal peptide. Intrachain disulfides connect Cys26-Cys40, Cys33-Cys45, Cys39-Cys49, and Cys44-Cys53. Glu29 is subject to 4-carboxyglutamate. The residue at position 56 (Pro56) is a Proline amide. Positions 60 to 69 (AKLLEFFRQR) are excised as a propeptide.

In terms of processing, contains 4 disulfide bonds. As to expression, expressed by the venom duct.

The protein localises to the secreted. The protein is Conotoxin Gla-TxXI of Conus textile (Cloth-of-gold cone).